Reading from the N-terminus, the 132-residue chain is Small ribosomal subunit protein uS8c (132 aa).

This sequence belongs to the universal ribosomal protein uS8 family. As to quaternary structure, part of the 30S ribosomal subunit.

Its subcellular location is the plastid. It is found in the chloroplast. Functionally, one of the primary rRNA binding proteins, it binds directly to 16S rRNA central domain where it helps coordinate assembly of the platform of the 30S subunit. This is Small ribosomal subunit protein uS8c (rps8) from Illicium oligandrum (Star anise).